Reading from the N-terminus, the 453-residue chain is tRNA-2-methylthio-N(6)-dimethylallyladenosine synthase (453 aa).

One can recognise an MTTase N-terminal domain in the interval 17-135 (GTFFIETWGC…FPEYLNRAKQ (119 aa)). 6 residues coordinate [4Fe-4S] cluster: Cys26, Cys62, Cys96, Cys172, Cys176, and Cys179. One can recognise a Radical SAM core domain in the interval 158–388 (RKSSTKAFVT…VEVVNKSCEK (231 aa)). In terms of domain architecture, TRAM spans 391–453 (KKYQDRIVKV…LSFSLEGEEV (63 aa)).

This sequence belongs to the methylthiotransferase family. MiaB subfamily. As to quaternary structure, monomer. It depends on [4Fe-4S] cluster as a cofactor.

It is found in the cytoplasm. The catalysed reaction is N(6)-dimethylallyladenosine(37) in tRNA + (sulfur carrier)-SH + AH2 + 2 S-adenosyl-L-methionine = 2-methylsulfanyl-N(6)-dimethylallyladenosine(37) in tRNA + (sulfur carrier)-H + 5'-deoxyadenosine + L-methionine + A + S-adenosyl-L-homocysteine + 2 H(+). Functionally, catalyzes the methylthiolation of N6-(dimethylallyl)adenosine (i(6)A), leading to the formation of 2-methylthio-N6-(dimethylallyl)adenosine (ms(2)i(6)A) at position 37 in tRNAs that read codons beginning with uridine. This Clostridium tetani (strain Massachusetts / E88) protein is tRNA-2-methylthio-N(6)-dimethylallyladenosine synthase.